A 36-amino-acid polypeptide reads, in one-letter code: F420-dependent NADP reductase (36 aa).

9-12 is an NADP(+) binding site; sequence TGNI.

This sequence belongs to the F420-dependent NADP reductase family. As to quaternary structure, homotetramer.

It catalyses the reaction reduced coenzyme F420-(gamma-L-Glu)(n) + NADP(+) = oxidized coenzyme F420-(gamma-L-Glu)(n) + NADPH + 2 H(+). Functionally, catalyzes the reduction of NADP(+) with F420H(2) via hydride transfer, and the reverse reaction, i.e. the reduction of F420 with NADPH. In M.organophilum, an alcohol-fermenting methanogen containing an NADP-dependent alcohol dehydrogenase, is probably involved in the regeneration of F420H(2) required for CO(2) reduction to methane. Thus, during growth on alcohol and CO(2), the F420-dependent NADP reductase probably has the function of coupling the NADP-dependent oxidation of the alcohol to the aldehyde with the F420-dependent reduction of CO(2) to methane. This chain is F420-dependent NADP reductase (fno), found in Methanogenium organophilum.